Consider the following 480-residue polypeptide: Glutamate--tRNA ligase (480 aa).

The short motif at Pro-21–Gly-31 is the 'HIGH' region element. Residues Cys-110, Cys-112, Cys-137, and His-139 each coordinate Zn(2+). The short motif at Lys-248–Arg-252 is the 'KMSKS' region element. Lys-251 is a binding site for ATP.

Belongs to the class-I aminoacyl-tRNA synthetase family. Glutamate--tRNA ligase type 1 subfamily. Monomer. The cofactor is Zn(2+).

It is found in the cytoplasm. It carries out the reaction tRNA(Glu) + L-glutamate + ATP = L-glutamyl-tRNA(Glu) + AMP + diphosphate. Its function is as follows. Catalyzes the attachment of glutamate to tRNA(Glu) in a two-step reaction: glutamate is first activated by ATP to form Glu-AMP and then transferred to the acceptor end of tRNA(Glu). The polypeptide is Glutamate--tRNA ligase (Haemophilus influenzae (strain ATCC 51907 / DSM 11121 / KW20 / Rd)).